The following is a 430-amino-acid chain: MASSAKSAEMPTISKTVNPTPDPHQEYLDPRITIALFEIGSHSPSSWGSLPFLKNSSHQVTEQQTAQKFNNLLKEIKDILKNMAGFEEKITEAKELFEETNITEDVSAHKENIRGLDKINEMLSTNLPVSLAPEKEDNEKKQEMILETNITEDVSAHKENIRGLDKINEMLSTNLPVSLAPEKEDNEKKQQMIMENQNSENTAQVFARDLVNRLEEKKVLNETQQSQEKAKNRLNVQEETMKIRNNMEQLLQEAEHWSKQHTELSKLIKSYQKSQKDISETLGNNGVGFQTQPNNEVSAKHELEEQVKKLSHDTYSLQLMAALLENECQILQQRVEILKELHHQKQGTLQEKPIQINYKQDKKNQKPSEAKKVEMYKQNKQAMKGTFWKKDRSCRSLDVCLNKKACNTQFNIHVARKALRGKMRSASSLR.

The segment at 1 to 25 (MASSAKSAEMPTISKTVNPTPDPHQ) is disordered. A coiled-coil region spans residues 62-102 (EQQTAQKFNNLLKEIKDILKNMAGFEEKITEAKELFEETNI). Phosphoserine is present on Ser107. Residues 166–177 (KINEMLSTNLPV) form a helix-loop-helix motif region. Residues 178-244 (SLAPEKEDNE…NVQEETMKIR (67 aa)) are basic motif. Coiled-coil stretches lie at residues 214–269 (LEEK…KLIK) and 316–351 (SLQL…TLQE). At Ser258 the chain carries Phosphoserine. Residues 303 to 324 (LEEQVKKLSHDTYSLQLMAALL) form a leucine-zipper region.

Interacts with PPP1CC isoform gamma-2. Phosphorylated by MAPK1/ERK2 and MAPK3/ERK1. In terms of tissue distribution, specifically and strongly expressed in the testis. Expressed in several tumor cell lines.

The protein localises to the cytoplasm. Its subcellular location is the nucleus. Its function is as follows. Transcription factor that binds to the DNA sequence 5'-CANNTG-3'(E box) and the G-box motif. May play an important role in the regulation of cell proliferation and differentiation during spermatogenesis. In Homo sapiens (Human), this protein is Spermatogenic leucine zipper protein 1 (SPZ1).